Reading from the N-terminus, the 126-residue chain is Transcription antitermination protein NusB (126 aa).

Belongs to the NusB family.

Involved in transcription antitermination. Required for transcription of ribosomal RNA (rRNA) genes. Binds specifically to the boxA antiterminator sequence of the ribosomal RNA (rrn) operons. This chain is Transcription antitermination protein NusB, found in Oceanobacillus iheyensis (strain DSM 14371 / CIP 107618 / JCM 11309 / KCTC 3954 / HTE831).